Reading from the N-terminus, the 512-residue chain is Zinc finger CCCH-type with G patch domain-containing protein (512 aa).

Residues 159 to 186 (QEMVPCAYFLEGDCKFNDEMCRFSHGEL) form a C3H1-type zinc finger. The tract at residues 255–280 (LEGDDVPSSDSESNSDSDEENEDDVV) is disordered. Positions 256-279 (EGDDVPSSDSESNSDSDEENEDDV) are enriched in acidic residues. Positions 308-354 (TKGIGSKIMLKMGYVVGAGLGSKGEGIVVPVSAQVLPQGRSLDYCMQ) constitute a G-patch domain. Positions 407 to 417 (SSNGSSSSSGS) are enriched in low complexity. A disordered region spans residues 407-432 (SSNGSSSSSGSKKPAAKDNQMDLPSC).

Its subcellular location is the nucleus. Functionally, transcription repressor. In Aedes aegypti (Yellowfever mosquito), this protein is Zinc finger CCCH-type with G patch domain-containing protein.